A 265-amino-acid chain; its full sequence is tRNA pseudouridine synthase A (265 aa).

Asp-52 acts as the Nucleophile in catalysis. A substrate-binding site is contributed by Tyr-112.

The protein belongs to the tRNA pseudouridine synthase TruA family. As to quaternary structure, homodimer.

It catalyses the reaction uridine(38/39/40) in tRNA = pseudouridine(38/39/40) in tRNA. Functionally, formation of pseudouridine at positions 38, 39 and 40 in the anticodon stem and loop of transfer RNAs. The polypeptide is tRNA pseudouridine synthase A (Akkermansia muciniphila (strain ATCC BAA-835 / DSM 22959 / JCM 33894 / BCRC 81048 / CCUG 64013 / CIP 107961 / Muc)).